Here is a 258-residue protein sequence, read N- to C-terminus: Transcription cofactor vestigial-like protein 1 (258 aa).

Composition is skewed to polar residues over residues 55-65 and 74-87; these read PQELTPSSQSE and SMSP…SPWT. A disordered region spans residues 55–93; sequence PQELTPSSQSEGVMLKNDDSMSPNQWRYSSPWTKPQPEV.

This sequence belongs to the vestigial family. Interacts with TEFs.

It is found in the nucleus. May act as a specific coactivator for the mammalian TEFs. This chain is Transcription cofactor vestigial-like protein 1 (VGLL1), found in Homo sapiens (Human).